The chain runs to 92 residues: Co-chaperonin GroES (92 aa).

It belongs to the GroES chaperonin family. Heptamer of 7 subunits arranged in a ring. Interacts with the chaperonin GroEL.

It localises to the cytoplasm. Functionally, together with the chaperonin GroEL, plays an essential role in assisting protein folding. The GroEL-GroES system forms a nano-cage that allows encapsulation of the non-native substrate proteins and provides a physical environment optimized to promote and accelerate protein folding. GroES binds to the apical surface of the GroEL ring, thereby capping the opening of the GroEL channel. The polypeptide is Co-chaperonin GroES (Thermotoga neapolitana).